Reading from the N-terminus, the 87-residue chain is Mitochondrial import inner membrane translocase subunit TIM9 (87 aa).

A Twin CX3C motif motif is present at residues 35–59 (CFSDCVNDFTSSKLTSKEQTCIMRC). 2 disulfide bridges follow: C35–C59 and C39–C55.

The protein belongs to the small Tim family. In terms of assembly, heterohexamer; composed of 3 copies of TIM9 and 3 copies of TIM10, named soluble 70 kDa complex. Associates with the TIM22 complex, whose core is composed of TIM22 and TIM54. Interacts with the transmembrane regions of multi-pass transmembrane proteins in transit.

Its subcellular location is the mitochondrion inner membrane. Its function is as follows. Mitochondrial intermembrane chaperone that participates in the import and insertion of multi-pass transmembrane proteins into the mitochondrial inner membrane. Also required for the transfer of beta-barrel precursors from the TOM complex to the sorting and assembly machinery (SAM complex) of the outer membrane. Acts as a chaperone-like protein that protects the hydrophobic precursors from aggregation and guide them through the mitochondrial intermembrane space. The chain is Mitochondrial import inner membrane translocase subunit TIM9 (TIM9) from Eremothecium gossypii (strain ATCC 10895 / CBS 109.51 / FGSC 9923 / NRRL Y-1056) (Yeast).